Reading from the N-terminus, the 516-residue chain is Na(+)/H(+) antiporter NhaB (516 aa).

Transmembrane regions (helical) follow at residues 23–43 (LALI…PFVA), 61–80 (CYPL…IGMT), 97–117 (LLLI…LFVF), 120–140 (LLLG…AAAF), 144–164 (FLDA…FYGI), 202–222 (LMMH…VGEP), 238–258 (FFIR…LTCL), 303–323 (AVIG…VGLI), 348–368 (TEAL…AVII), 391–411 (LFYL…VGTV), 447–467 (ATPN…APLI), and 475–495 (VWMA…CVEF).

The protein belongs to the NhaB Na(+)/H(+) (TC 2.A.34) antiporter family.

It is found in the cell inner membrane. The enzyme catalyses 2 Na(+)(in) + 3 H(+)(out) = 2 Na(+)(out) + 3 H(+)(in). In terms of biological role, na(+)/H(+) antiporter that extrudes sodium in exchange for external protons. This Klebsiella pneumoniae (strain 342) protein is Na(+)/H(+) antiporter NhaB.